Reading from the N-terminus, the 97-residue chain is Large ribosomal subunit protein uL23 (97 aa).

It belongs to the universal ribosomal protein uL23 family. Part of the 50S ribosomal subunit. Contacts protein L29, and trigger factor when it is bound to the ribosome.

In terms of biological role, one of the early assembly proteins it binds 23S rRNA. One of the proteins that surrounds the polypeptide exit tunnel on the outside of the ribosome. Forms the main docking site for trigger factor binding to the ribosome. The sequence is that of Large ribosomal subunit protein uL23 from Rhizobium rhizogenes (strain K84 / ATCC BAA-868) (Agrobacterium radiobacter).